Here is a 550-residue protein sequence, read N- to C-terminus: Luciferin 4-monooxygenase (550 aa).

The short motif at 548-550 (SKL) is the Microbody targeting signal element.

It belongs to the ATP-dependent AMP-binding enzyme family. It depends on Mg(2+) as a cofactor.

The protein localises to the peroxisome. It catalyses the reaction firefly D-luciferin + ATP + O2 = firefly oxyluciferin + hnu + AMP + CO2 + diphosphate. Produces green light with a wavelength of 562 nm. This Photinus pyralis (Common eastern firefly) protein is Luciferin 4-monooxygenase.